Consider the following 212-residue polypeptide: Peptide methionine sulfoxide reductase MsrA (212 aa).

Residue cysteine 52 is part of the active site.

It belongs to the MsrA Met sulfoxide reductase family.

It carries out the reaction L-methionyl-[protein] + [thioredoxin]-disulfide + H2O = L-methionyl-(S)-S-oxide-[protein] + [thioredoxin]-dithiol. The enzyme catalyses [thioredoxin]-disulfide + L-methionine + H2O = L-methionine (S)-S-oxide + [thioredoxin]-dithiol. Has an important function as a repair enzyme for proteins that have been inactivated by oxidation. Catalyzes the reversible oxidation-reduction of methionine sulfoxide in proteins to methionine. This is Peptide methionine sulfoxide reductase MsrA from Cronobacter sakazakii (strain ATCC BAA-894) (Enterobacter sakazakii).